The chain runs to 179 residues: Molybdopterin synthase catalytic subunit (179 aa).

Residues 1 to 10 are compositionally biased toward polar residues; sequence MTTSEDQTTP. The segment at 1-21 is disordered; that stretch reads MTTSEDQTTPAHLDPKTYPRH. Substrate is bound by residues 127 to 128, Lys143, and 150 to 152; these read HR and KRE.

The protein belongs to the MoaE family. MOCS2B subfamily. In terms of assembly, heterotetramer; composed of 2 small (MOCS2A) and 2 large (MOCS2B) subunits.

It localises to the cytoplasm. It carries out the reaction 2 [molybdopterin-synthase sulfur-carrier protein]-C-terminal-Gly-aminoethanethioate + cyclic pyranopterin phosphate + H2O = molybdopterin + 2 [molybdopterin-synthase sulfur-carrier protein]-C-terminal Gly-Gly + 2 H(+). The protein operates within cofactor biosynthesis; molybdopterin biosynthesis. Its function is as follows. Catalytic subunit of the molybdopterin synthase complex, a complex that catalyzes the conversion of precursor Z into molybdopterin. Acts by mediating the incorporation of 2 sulfur atoms from thiocarboxylated MOCS2A into precursor Z to generate a dithiolene group. The polypeptide is Molybdopterin synthase catalytic subunit (Aspergillus oryzae (strain ATCC 42149 / RIB 40) (Yellow koji mold)).